The primary structure comprises 211 residues: MGKKPVVIGVAGGSGSGKTSVARAIYDHFGDRSILVLEQDFYYKDQSHLPFEERLKTNYDHPLAFDNDLLIEHIHKLLRYEPIDKPVYDYTLHTRSSDVIRVEPKDVIIVEGILVLEDERLRNLMDIKVYVDTDPDIRIIRRLIRDIKERGRTFDSVIEQYLSVVRPMHNQFVEPTKRYADVIIPEGGQNVVAIDLMVAKIRTVLEQKAVL.

Residue 12–19 (GGSGSGKT) participates in ATP binding.

The protein belongs to the uridine kinase family.

It is found in the cytoplasm. The enzyme catalyses uridine + ATP = UMP + ADP + H(+). It catalyses the reaction cytidine + ATP = CMP + ADP + H(+). It participates in pyrimidine metabolism; CTP biosynthesis via salvage pathway; CTP from cytidine: step 1/3. Its pathway is pyrimidine metabolism; UMP biosynthesis via salvage pathway; UMP from uridine: step 1/1. The polypeptide is Uridine kinase (Geobacillus kaustophilus (strain HTA426)).